We begin with the raw amino-acid sequence, 380 residues long: Cytochrome b (380 aa).

4 helical membrane-spanning segments follow: residues 33 to 53 (FGSL…FLAM), 77 to 98 (WLIR…YLHV), 113 to 133 (WNIG…GYVL), and 178 to 198 (FFAF…LHLL). The heme b site is built by His83 and His97. The heme b site is built by His182 and His196. His201 is an a ubiquinone binding site. The next 4 helical transmembrane spans lie at 226–246 (YKDL…ALFS), 288–308 (LGGV…PLLH), 320–340 (LTQI…WIGG), and 347–367 (FITV…IFIP).

Belongs to the cytochrome b family. As to quaternary structure, the cytochrome bc1 complex contains 3 respiratory subunits (MT-CYB, CYC1 and UQCRFS1), 2 core proteins (UQCRC1 and UQCRC2) and probably 6 low-molecular weight proteins. Heme b is required as a cofactor.

It is found in the mitochondrion inner membrane. In terms of biological role, component of the ubiquinol-cytochrome c reductase complex (complex III or cytochrome b-c1 complex) that is part of the mitochondrial respiratory chain. The b-c1 complex mediates electron transfer from ubiquinol to cytochrome c. Contributes to the generation of a proton gradient across the mitochondrial membrane that is then used for ATP synthesis. The polypeptide is Cytochrome b (mt-cyb) (Neocyttus rhomboidalis (Spiky oreo dory)).